Here is a 218-residue protein sequence, read N- to C-terminus: MSLGLIGRKVGMTRLFTDEGDSIPVTVIDVSDNRIAQIKTQATDGYDAIQLAHGTRRATRVTKAMAGHFAKAGVMAGNGLNEFQLDAAKIAEMTPGQVIPADTAFTAGQKVDVQGVSIGKGYAGTIKRYHFASGRASHGNSRSHNVPGSIGMAQDPGRVFPGKRMTGHLGDVTRTVQNLVIARIDAERNLIMVKGAIPGAPGGKVIVTPAVKTPLKKK.

At Gln-154 the chain carries N5-methylglutamine.

The protein belongs to the universal ribosomal protein uL3 family. As to quaternary structure, part of the 50S ribosomal subunit. Forms a cluster with proteins L14 and L19. Methylated by PrmB.

One of the primary rRNA binding proteins, it binds directly near the 3'-end of the 23S rRNA, where it nucleates assembly of the 50S subunit. The polypeptide is Large ribosomal subunit protein uL3 (Polynucleobacter asymbioticus (strain DSM 18221 / CIP 109841 / QLW-P1DMWA-1) (Polynucleobacter necessarius subsp. asymbioticus)).